The primary structure comprises 436 residues: Methylenetetrahydrofolate--tRNA-(uracil-5-)-methyltransferase TrmFO (436 aa).

Residue 11 to 16 (GAGLAG) participates in FAD binding.

It belongs to the MnmG family. TrmFO subfamily. Requires FAD as cofactor.

The protein resides in the cytoplasm. It carries out the reaction uridine(54) in tRNA + (6R)-5,10-methylene-5,6,7,8-tetrahydrofolate + NADH + H(+) = 5-methyluridine(54) in tRNA + (6S)-5,6,7,8-tetrahydrofolate + NAD(+). It catalyses the reaction uridine(54) in tRNA + (6R)-5,10-methylene-5,6,7,8-tetrahydrofolate + NADPH + H(+) = 5-methyluridine(54) in tRNA + (6S)-5,6,7,8-tetrahydrofolate + NADP(+). In terms of biological role, catalyzes the folate-dependent formation of 5-methyl-uridine at position 54 (M-5-U54) in all tRNAs. This is Methylenetetrahydrofolate--tRNA-(uracil-5-)-methyltransferase TrmFO from Shouchella clausii (strain KSM-K16) (Alkalihalobacillus clausii).